The chain runs to 168 residues: Protein-export protein SecB (168 aa).

The disordered stretch occupies residues Met1–Val21.

Belongs to the SecB family. Homotetramer, a dimer of dimers. One homotetramer interacts with 1 SecA dimer.

It localises to the cytoplasm. Functionally, one of the proteins required for the normal export of preproteins out of the cell cytoplasm. It is a molecular chaperone that binds to a subset of precursor proteins, maintaining them in a translocation-competent state. It also specifically binds to its receptor SecA. This chain is Protein-export protein SecB, found in Chelativorans sp. (strain BNC1).